Here is a 312-residue protein sequence, read N- to C-terminus: Aspartate carbamoyltransferase catalytic subunit (312 aa).

Residues arginine 55 and threonine 56 each coordinate carbamoyl phosphate. Lysine 83 contributes to the L-aspartate binding site. 3 residues coordinate carbamoyl phosphate: arginine 105, histidine 138, and glutamine 141. The L-aspartate site is built by arginine 171 and arginine 225. Carbamoyl phosphate contacts are provided by glycine 266 and proline 267.

It belongs to the aspartate/ornithine carbamoyltransferase superfamily. ATCase family. Heterododecamer (2C3:3R2) of six catalytic PyrB chains organized as two trimers (C3), and six regulatory PyrI chains organized as three dimers (R2).

The catalysed reaction is carbamoyl phosphate + L-aspartate = N-carbamoyl-L-aspartate + phosphate + H(+). The protein operates within pyrimidine metabolism; UMP biosynthesis via de novo pathway; (S)-dihydroorotate from bicarbonate: step 2/3. Its function is as follows. Catalyzes the condensation of carbamoyl phosphate and aspartate to form carbamoyl aspartate and inorganic phosphate, the committed step in the de novo pyrimidine nucleotide biosynthesis pathway. This is Aspartate carbamoyltransferase catalytic subunit from Corynebacterium glutamicum (strain R).